Here is a 371-residue protein sequence, read N- to C-terminus: Serine/threonine-protein kinase 17B (371 aa).

In terms of domain architecture, Protein kinase spans 33–293 (TLTPKELGRG…AESCLSHSWL (261 aa)). ATP is bound by residues 39 to 47 (LGRGKFAVV) and K62. Catalysis depends on D158, which acts as the Proton acceptor. The disordered stretch occupies residues 308–345 (SESSQTQDLSLRSSEDKTPKSCNGSCGDREDKENIPED). Residues 309–319 (ESSQTQDLSLR) are compositionally biased toward polar residues.

It belongs to the protein kinase superfamily. CAMK Ser/Thr protein kinase family. DAP kinase subfamily. As to quaternary structure, interacts with CHP1; the interaction induces CHP1 to translocate from the Golgi to the nucleus. Autophosphorylated. As to expression, highly expressed in thymus, spleen, and testis, lower levels present in the brain.

The protein localises to the nucleus. It is found in the cell membrane. The protein resides in the endoplasmic reticulum-Golgi intermediate compartment. The catalysed reaction is L-seryl-[protein] + ATP = O-phospho-L-seryl-[protein] + ADP + H(+). It catalyses the reaction L-threonyl-[protein] + ATP = O-phospho-L-threonyl-[protein] + ADP + H(+). In terms of biological role, acts as a positive regulator of apoptosis. Phosphorylates myosin light chains. In Rattus norvegicus (Rat), this protein is Serine/threonine-protein kinase 17B (Stk17b).